The following is a 226-amino-acid chain: Glutathione peroxidase 3 (226 aa).

Residues 1–24 form the signal peptide; sequence MARLLQASCLLSLLLAGFLPQSRG. Residue Sec73 is part of the active site. Position 73 (Sec73) is a non-standard amino acid, selenocysteine.

Belongs to the glutathione peroxidase family. In terms of assembly, homotetramer. In terms of tissue distribution, expressed intensively in the kidney and adrenal gland, and weakly in the cerebellum, heart, and lung. Secreted in plasma.

Its subcellular location is the secreted. It carries out the reaction 2 glutathione + H2O2 = glutathione disulfide + 2 H2O. It catalyses the reaction tert-butyl hydroperoxide + 2 glutathione = tert-butanol + glutathione disulfide + H2O. Protects cells and enzymes from oxidative damage, by catalyzing the reduction of hydrogen peroxide, lipid peroxides and organic hydroperoxide, by glutathione. This is Glutathione peroxidase 3 from Macaca fuscata fuscata (Japanese macaque).